A 508-amino-acid polypeptide reads, in one-letter code: DASH complex subunit ASK1 (508 aa).

Disordered stretches follow at residues 86–138 (LVDG…TLSS) and 150–355 (SRAA…QLRS). Positions 116-138 (EPSQYTPRPQTSAGGHDTTTLSS) are enriched in polar residues. Residues 161-175 (QHHDDSSVLTDRDGD) show a composition bias toward basic and acidic residues. Positions 201–213 (DEMDIDMDEEDSE) are enriched in acidic residues. The span at 229–238 (RYYDDDHGFE) shows a compositional bias: basic and acidic residues. Acidic residues predominate over residues 239–258 (QGEEEEDEEEEEEEEEEEEG). Positions 326–338 (IKQEDTEKKRPLW) are enriched in basic and acidic residues.

It belongs to the DASH complex ASK1 family. In terms of assembly, component of the DASH complex consisting of ASK1, DAD1, DAD2, DAD3, DAD4, DAM1, DUO1, HSK3, SPC19 and SPC34, with a stoichiometry of one copy of each subunit per complex. Multiple DASH complexes oligomerize to form a ring that encircles spindle microtubules and organizes the rod-like NDC80 complexes of the outer kinetochore. On cytoplasmic microtubules, DASH complexes appear to form patches instead of rings.

It localises to the chromosome. Its subcellular location is the centromere. The protein resides in the kinetochore. It is found in the cytoplasm. The protein localises to the cytoskeleton. It localises to the spindle. Its subcellular location is the nucleus. In terms of biological role, component of the DASH complex that connects microtubules with kinetochores and couples microtubule depolymerisation to chromosome movement; it is involved in retrieving kinetochores to the spindle poles before their re-orientation on the spindle in early mitosis and allows microtubule depolymerization to pull chromosomes apart and resist detachment during anaphase. Kinetochores, consisting of a centromere-associated inner segment and a microtubule-contacting outer segment, play a crucial role in chromosome segregation by mediating the physical connection between centromeric DNA and microtubules. Kinetochores also serve as an input point for the spindle assembly checkpoint, which delays anaphase until all chromosomes have bioriented on the mitotic spindle. This Chaetomium thermophilum (strain DSM 1495 / CBS 144.50 / IMI 039719) (Thermochaetoides thermophila) protein is DASH complex subunit ASK1.